The following is a 164-amino-acid chain: MHYEKKLSIELKEKLISVNRVSKTVKGGRIFSFTALTVVGNNQGKVGFGYGKAREVPSAIQKAMEKARKNMIIIPLFKNTIQHSVTGLHTGSFIFMKPASEGTGIIAGGAMRSVLEVAGIQNILAKIYGSTNPINVVRATLNGLKKIRSPEMISKKRGKIITII.

The region spanning 11–74 (LKEKLISVNR…EKARKNMIII (64 aa)) is the S5 DRBM domain.

Belongs to the universal ribosomal protein uS5 family. In terms of assembly, part of the 30S ribosomal subunit. Contacts proteins S4 and S8.

In terms of biological role, with S4 and S12 plays an important role in translational accuracy. Its function is as follows. Located at the back of the 30S subunit body where it stabilizes the conformation of the head with respect to the body. This chain is Small ribosomal subunit protein uS5, found in Buchnera aphidicola subsp. Cinara cedri (strain Cc).